We begin with the raw amino-acid sequence, 434 residues long: 3-phosphoshikimate 1-carboxyvinyltransferase (434 aa).

3-phosphoshikimate contacts are provided by Lys22, Ser23, and Arg27. Phosphoenolpyruvate is bound at residue Lys22. Phosphoenolpyruvate-binding residues include Gly93 and Arg121. Residues Ser168, Ser169, Gln170, Ser199, Asp320, and Lys347 each contribute to the 3-phosphoshikimate site. Position 170 (Gln170) interacts with phosphoenolpyruvate. The active-site Proton acceptor is the Asp320. Phosphoenolpyruvate-binding residues include Arg351, Arg394, and Lys419.

This sequence belongs to the EPSP synthase family. Monomer.

The protein resides in the cytoplasm. It catalyses the reaction 3-phosphoshikimate + phosphoenolpyruvate = 5-O-(1-carboxyvinyl)-3-phosphoshikimate + phosphate. The protein operates within metabolic intermediate biosynthesis; chorismate biosynthesis; chorismate from D-erythrose 4-phosphate and phosphoenolpyruvate: step 6/7. Catalyzes the transfer of the enolpyruvyl moiety of phosphoenolpyruvate (PEP) to the 5-hydroxyl of shikimate-3-phosphate (S3P) to produce enolpyruvyl shikimate-3-phosphate and inorganic phosphate. This chain is 3-phosphoshikimate 1-carboxyvinyltransferase, found in Burkholderia vietnamiensis (strain G4 / LMG 22486) (Burkholderia cepacia (strain R1808)).